Consider the following 624-residue polypeptide: Ubiquilin-2 (624 aa).

Disordered stretches follow at residues 1–32 (MAEN…EPKI) and 106–141 (NRPQ…TNSN). Alanine 2 is modified (N-acetylalanine). Residues 15–32 (RGPAAAQGSAAAPAEPKI) are compositionally biased toward low complexity. The Ubiquitin-like domain occupies 33-107 (IKVTVKTPKE…VHLVIKSQNR (75 aa)). Residues 106-115 (NRPQGQSTQP) are compositionally biased toward polar residues. Over residues 116 to 141 (SNAAGTNTTSASTPRSNSTPISTNSN) the composition is skewed to low complexity. STI1 domains follow at residues 178-206 (SPEM…QLIM) and 208-247 (NPQM…MQEM). The disordered stretch occupies residues 287–349 (FGGNPFASVG…SGSGNSSSNA (63 aa)). Over residues 294–304 (SVGSSSSSGEG) the composition is skewed to low complexity. A compositionally biased stretch (pro residues) spans 316-325 (LPNPWAPPPA). The segment covering 326-349 (TQSSATTSTTTSTGSGSGNSSSNA) has biased composition (low complexity). 2 STI1 domains span residues 379 to 426 (NPQL…QEQM) and 430 to 462 (LPAF…QQGL). 12 tandem repeats follow at residues 491-493 (PVG), 494-496 (PVT), 497-499 (PIG), 500-502 (PIG), 503-505 (PIV), 506-508 (PFT), 509-511 (PIG), 512-514 (PIG), 515-517 (PIG), 518-520 (PTG), 521-523 (PAA), and 524-526 (PPG). The interval 491 to 526 (PVGPVTPIGPIGPIVPFTPIGPIGPIGPTGPAAPPG) is 12 X 3 AA tandem repeats of P-X-X. Residues 512–556 (PIGPIGPTGPAAPPGSTGSGGPTGPTVSSAAPSETTSPTSESGPN) are disordered. The segment covering 535–553 (GPTVSSAAPSETTSPTSES) has biased composition (low complexity). One can recognise a UBA domain in the interval 581–621 (RFQQQLEQLNAMGFLNREANLQALIATGGDINAAIERLLGS).

Homodimer. Forms heterodimer with UBQLN1. Binds UBE3A and BTRC. Interacts with the 19S proteasome subunit. Interacts with C9orf72. Interacts with HNRNPA1 and HNRNPU. Found in a complex with UBQLN1 and MAP1LC3A/B/C. Interacts with EPS15, EPN1 and EPN2. Interacts with HERPUD1. Interacts with RAD23A. Interacts with TARDBP. Interacts (via C-terminus) with FAF2 (via N-terminus). Interacts with UBQLN4. Binds CD47. Degraded during macroautophagy.

It is found in the cytoplasm. The protein localises to the nucleus. Its subcellular location is the membrane. The protein resides in the cytoplasmic vesicle. It localises to the autophagosome. Plays an important role in the regulation of different protein degradation mechanisms and pathways including ubiquitin-proteasome system (UPS), autophagy and the endoplasmic reticulum-associated protein degradation (ERAD) pathway. Mediates the proteasomal targeting of misfolded or accumulated proteins for degradation by binding (via UBA domain) to their polyubiquitin chains and by interacting (via ubiquitin-like domain) with the subunits of the proteasome. Plays a role in the ERAD pathway via its interaction with ER-localized proteins FAF2/UBXD8 and HERPUD1 and may form a link between the polyubiquitinated ERAD substrates and the proteasome. Involved in the regulation of macroautophagy and autophagosome formation; required for maturation of autophagy-related protein LC3 from the cytosolic form LC3-I to the membrane-bound form LC3-II and may assist in the maturation of autophagosomes to autolysosomes by mediating autophagosome-lysosome fusion. Negatively regulates the endocytosis of GPCR receptors: AVPR2 and ADRB2, by specifically reducing the rate at which receptor-arrestin complexes concentrate in clathrin-coated pits (CCPs). This is Ubiquilin-2 (UBQLN2) from Homo sapiens (Human).